We begin with the raw amino-acid sequence, 358 residues long: Protein SRG1 (358 aa).

The Fe2OG dioxygenase domain maps to 209–309 (SVQSMRMNYY…RLSIATFHNV (101 aa)). Residues histidine 233, aspartate 235, and histidine 290 each coordinate Fe cation.

This sequence belongs to the iron/ascorbate-dependent oxidoreductase family. In terms of tissue distribution, low expression in roots and leaves.

This Arabidopsis thaliana (Mouse-ear cress) protein is Protein SRG1 (SRG1).